Reading from the N-terminus, the 259-residue chain is MNIQQVIAITGAGSGIGLELVRSFKAAGYCVSALVRNEEQEAGLRSEFKDAIEIVAGDVCDHATNEKLVNKAVARFGHLDCFIGNAGIWDYMLGVDEPWEKLSGSFEEIFDINVKSYFSGISAALPELKKTNGSVVVTASVSSYAAGGGGSCYIASKHAVLGMVKALAYELAPHIRVNGVAPGGTVTSLAGPASAGFDKTKMKDMPGIDDMIKGLTPLGFAARPEDVVAPYLLLASREQGKFITGTVIGIDGGMALGRK.

NAD(+) is bound by residues 8 to 35 and Asp-58; that span reads AITGAGSGIGLELVRSFKAAGYCVSALV. Ser-140 lines the substrate pocket. Tyr-153 functions as the Proton acceptor in the catalytic mechanism. NAD(+) is bound at residue Lys-157.

This sequence belongs to the short-chain dehydrogenases/reductases (SDR) family.

It carries out the reaction (1R,2S)-1,2-dihydronaphthalene-1,2-diol + NAD(+) = naphthalene-1,2-diol + NADH + H(+). Its pathway is aromatic compound metabolism; naphthalene degradation. Functionally, catalyzes the oxidation of naphthalene dihydrodiol into 1,2-dihydroxynaphthalene. The chain is 1,2-dihydroxy-1,2-dihydronaphthalene dehydrogenase from Ralstonia sp.